The following is a 199-amino-acid chain: Thymidine kinase (199 aa).

ATP contacts are provided by residues 15–22 and 88–91; these read GSMFSGKS and DEVQ. Glu-89 acts as the Proton acceptor in catalysis. Residues Cys-145, Cys-148, Cys-183, and His-186 each contribute to the Zn(2+) site.

It belongs to the thymidine kinase family. As to quaternary structure, homotetramer.

It localises to the cytoplasm. It catalyses the reaction thymidine + ATP = dTMP + ADP + H(+). This is Thymidine kinase from Staphylococcus saprophyticus subsp. saprophyticus (strain ATCC 15305 / DSM 20229 / NCIMB 8711 / NCTC 7292 / S-41).